A 97-amino-acid polypeptide reads, in one-letter code: Aspartyl/glutamyl-tRNA(Asn/Gln) amidotransferase subunit C (97 aa).

The protein belongs to the GatC family. Heterotrimer of A, B and C subunits.

It catalyses the reaction L-glutamyl-tRNA(Gln) + L-glutamine + ATP + H2O = L-glutaminyl-tRNA(Gln) + L-glutamate + ADP + phosphate + H(+). The enzyme catalyses L-aspartyl-tRNA(Asn) + L-glutamine + ATP + H2O = L-asparaginyl-tRNA(Asn) + L-glutamate + ADP + phosphate + 2 H(+). Functionally, allows the formation of correctly charged Asn-tRNA(Asn) or Gln-tRNA(Gln) through the transamidation of misacylated Asp-tRNA(Asn) or Glu-tRNA(Gln) in organisms which lack either or both of asparaginyl-tRNA or glutaminyl-tRNA synthetases. The reaction takes place in the presence of glutamine and ATP through an activated phospho-Asp-tRNA(Asn) or phospho-Glu-tRNA(Gln). This chain is Aspartyl/glutamyl-tRNA(Asn/Gln) amidotransferase subunit C, found in Prochlorococcus marinus (strain AS9601).